A 115-amino-acid chain; its full sequence is MNKDTKDIWSGFFMGSGSLIVVGLLIFVEALTMSLIVYYGLNHVLNPLLIDTYNIQNVHVTLPHAFVIGVLLNVFVKGVKRSDQEKDENIFKKAGKSLFHSTFALIVLYVSTLFI.

3 helical membrane passes run I20–N42, V58–G78, and G95–I115.

It localises to the cell membrane. The protein is SPbeta prophage-derived uncharacterized membrane protein YosE (yosE) of Bacillus subtilis (strain 168).